The chain runs to 522 residues: Protein DETOXIFICATION 31 (522 aa).

12 helical membrane passes run 89–109 (GAVT…AVSI), 113–133 (VIAG…ETLC), 154–174 (VILS…APIL), 183–203 (ISAM…AYAI), 217–237 (IMVM…FTWL), 249–269 (LALV…VYIF), 299–319 (AAML…AGYL), 324–344 (VSVA…MVAF), 371–391 (VVAV…LLFF), 415–435 (MLAF…VAVG), 441–461 (VVAY…GLLL), and 471–491 (GIWW…TWMI).

The protein belongs to the multi antimicrobial extrusion (MATE) (TC 2.A.66.1) family.

It localises to the membrane. In terms of biological role, positively mediates root hair elongation. The sequence is that of Protein DETOXIFICATION 31 from Arabidopsis thaliana (Mouse-ear cress).